The chain runs to 761 residues: MRYNQFSYIPTKPNEAFEELKGLGFPLNKKNSDKANLEAFLRHSFLNQTDTDYALSLLIVDAKTDALTFFKSNSDLTLENLQWIYLQLLGFIPFVDFKDPKAFLQDINFPVSYDNIFQSLHHLLACRGKSGNTLIDQLVADGLLHADNHYHFFNGKSLATFNTNQLIREVVYVETSLDTMSSGEHDLVKVNIIRPTTEHTIPTMMTASPYHQGINDPAADQKTYQMEGALAVKQPKHIQVDTKPFKEEVKHPSKLPISPATESFTHIDSYSLNDYFLSRGFANIYVSGVGTAGSTGFMTSGDYQQIQSFKAVIDWLNGKVTAFTSHKRDKQVKANWSNGLVATTGKSYLGTMSTGLATTGVEGLKVIIAEAAISTWYDYYRENGLVCSPGGYPGEDLDVLTELTYSRNLLAGDYIKNNDCYQALLNEQSKAIDRQSGDYNQYWHDRNYLTHVNNVKSRVVYTHGLQDWNVKPRHVYKVFNALPQTIKKHLFLHQGQHVYMHNWQSIDFRESMNALLSQELLGIDNHFQLEEVIWQDNTTEQTWQVLDAFGGNHQEQIGLGDSKKLIDNHYDKEAFDTYCKDFNVFKNDLFKGNNKTNQITINLPLKKNYLLNGQCKLHLRVKTSDKKAILSAQILDYGPKKRFKDTPTIKFLNSLDNGKNFAREALRELPFTKDHYRVISKGVLNLQNRTDLLTIEAIEPEQWFDIEFSLQPSIYQLSKGDNLRIILYTTDFEHTIRDNASYSITVDLSQSYLTIPTNQGN.

Catalysis depends on charge relay system residues serine 347, aspartate 467, and histidine 497.

The protein belongs to the peptidase S15 family. Homodimer.

It localises to the cytoplasm. It carries out the reaction Hydrolyzes Xaa-Pro-|- bonds to release unblocked, N-terminal dipeptides from substrates including Ala-Pro-|-p-nitroanilide and (sequentially) Tyr-Pro-|-Phe-Pro-|-Gly-Pro-|-Ile.. Removes N-terminal dipeptides sequentially from polypeptides having unsubstituted N-termini provided that the penultimate residue is proline. This is Xaa-Pro dipeptidyl-peptidase from Streptococcus agalactiae serotype V (strain ATCC BAA-611 / 2603 V/R).